The primary structure comprises 332 residues: Malate dehydrogenase, cytoplasmic (332 aa).

NAD(+) contacts are provided by residues 16–17 (QI), Asp-43, and Gly-90. Residue Arg-99 participates in oxaloacetate binding. The NAD(+) site is built by Gln-113 and Asn-132. Residues Asn-132, Arg-163, His-188, and Ser-243 each coordinate oxaloacetate. Residue His-188 is the Proton acceptor of the active site.

This sequence belongs to the LDH/MDH superfamily. MDH type 2 family. As to quaternary structure, homodimer.

The protein localises to the cytoplasm. It catalyses the reaction (S)-malate + NAD(+) = oxaloacetate + NADH + H(+). The protein is Malate dehydrogenase, cytoplasmic (NR1) of Beta vulgaris (Sugar beet).